The primary structure comprises 244 residues: Type III pantothenate kinase (244 aa).

12-19 (VVGNTHVR) is a binding site for ATP. Substrate is bound by residues Tyr-79 and 83 to 86 (GLDR). Catalysis depends on Asp-85, which acts as the Proton acceptor. Asp-105 provides a ligand contact to K(+). Thr-108 lines the ATP pocket. Thr-163 is a binding site for substrate.

The protein belongs to the type III pantothenate kinase family. Homodimer. Requires NH4(+) as cofactor. K(+) serves as cofactor.

The protein localises to the cytoplasm. The catalysed reaction is (R)-pantothenate + ATP = (R)-4'-phosphopantothenate + ADP + H(+). The protein operates within cofactor biosynthesis; coenzyme A biosynthesis; CoA from (R)-pantothenate: step 1/5. Functionally, catalyzes the phosphorylation of pantothenate (Pan), the first step in CoA biosynthesis. The protein is Type III pantothenate kinase of Synechococcus sp. (strain JA-3-3Ab) (Cyanobacteria bacterium Yellowstone A-Prime).